Reading from the N-terminus, the 281-residue chain is Large ribosomal subunit protein uL2 (281 aa).

Positions 222–281 (TVRGSVMNPNDHPHGGGEGRTPIGRKSPVTPWGKKALGVKTRNTKKPSEKLIVRKRNAKK) are disordered.

This sequence belongs to the universal ribosomal protein uL2 family. As to quaternary structure, part of the 50S ribosomal subunit. Forms a bridge to the 30S subunit in the 70S ribosome.

Functionally, one of the primary rRNA binding proteins. Required for association of the 30S and 50S subunits to form the 70S ribosome, for tRNA binding and peptide bond formation. It has been suggested to have peptidyltransferase activity; this is somewhat controversial. Makes several contacts with the 16S rRNA in the 70S ribosome. The chain is Large ribosomal subunit protein uL2 from Mesoplasma florum (strain ATCC 33453 / NBRC 100688 / NCTC 11704 / L1) (Acholeplasma florum).